A 139-amino-acid polypeptide reads, in one-letter code: Nuclear transcription factor Y subunit B-4 (139 aa).

A DNA-binding region spans residues 8-14; the sequence is LPIANVG. Positions 35–46 are subunit association domain (SAD); that stretch reads VQECATEFISFV. A compositionally biased stretch (basic and acidic residues) spans 90–115; it reads YREAERERTEHNKGSNDSGNEKETNT. The interval 90–139 is disordered; sequence YREAERERTEHNKGSNDSGNEKETNTRSDVQNQSTKFIRVVEKGSSSSAR. The span at 116–125 shows a compositional bias: polar residues; that stretch reads RSDVQNQSTK.

This sequence belongs to the NFYB/HAP3 subunit family. Heterotrimeric transcription factor composed of three components, NF-YA, NF-YB and NF-YC. NF-YB and NF-YC must interact and dimerize for NF-YA association and DNA binding. Expressed in flowers, siliques and young rosettes.

The protein localises to the nucleus. Component of the NF-Y/HAP transcription factor complex. The NF-Y complex stimulates the transcription of various genes by recognizing and binding to a CCAAT motif in promoters. This is Nuclear transcription factor Y subunit B-4 (NFYB4) from Arabidopsis thaliana (Mouse-ear cress).